Consider the following 246-residue polypeptide: Probable transcriptional regulatory protein HAPS_0943 (246 aa).

Belongs to the TACO1 family.

It localises to the cytoplasm. The polypeptide is Probable transcriptional regulatory protein HAPS_0943 (Glaesserella parasuis serovar 5 (strain SH0165) (Haemophilus parasuis)).